The primary structure comprises 219 residues: 7-cyano-7-deazaguanine synthase (219 aa).

9-19 (YSGGMDSFTVL) contributes to the ATP binding site. Positions 185, 193, 196, and 199 each coordinate Zn(2+).

This sequence belongs to the QueC family. Requires Zn(2+) as cofactor.

The enzyme catalyses 7-carboxy-7-deazaguanine + NH4(+) + ATP = 7-cyano-7-deazaguanine + ADP + phosphate + H2O + H(+). The protein operates within purine metabolism; 7-cyano-7-deazaguanine biosynthesis. Catalyzes the ATP-dependent conversion of 7-carboxy-7-deazaguanine (CDG) to 7-cyano-7-deazaguanine (preQ(0)). The protein is 7-cyano-7-deazaguanine synthase of Marinomonas sp. (strain MWYL1).